The following is a 116-amino-acid chain: uncharacterized protein (116 aa).

2 helical membrane passes run 40-60 (AIVKVDFFSFDGAGFCIIGIL) and 72-92 (FLGSICRSIFSIVAQMQVVPI).

Its subcellular location is the membrane. This is an uncharacterized protein from Saccharomyces cerevisiae (strain ATCC 204508 / S288c) (Baker's yeast).